Consider the following 157-residue polypeptide: Transcription elongation factor GreA (157 aa).

It belongs to the GreA/GreB family.

Necessary for efficient RNA polymerase transcription elongation past template-encoded arresting sites. The arresting sites in DNA have the property of trapping a certain fraction of elongating RNA polymerases that pass through, resulting in locked ternary complexes. Cleavage of the nascent transcript by cleavage factors such as GreA or GreB allows the resumption of elongation from the new 3'terminus. GreA releases sequences of 2 to 3 nucleotides. This Chelativorans sp. (strain BNC1) protein is Transcription elongation factor GreA.